The chain runs to 167 residues: Ubiquitin-fold modifier-conjugating enzyme 1 (167 aa).

Catalysis depends on C116, which acts as the Glycyl thioester intermediate. K122 is covalently cross-linked (Glycyl lysine isopeptide (Lys-Gly) (interchain with G-Cter in UFM1)).

It belongs to the ubiquitin-conjugating enzyme family. UFC1 subfamily. Interacts with UBA5 (via C-terminus). Interacts with UFL1. Interacts with UFM1. Interacts with KIRREL3. In terms of processing, ufmylated at Lys-122. Deufmylated by UFSP1.

E2-like enzyme which specifically catalyzes the second step in ufmylation. Accepts the ubiquitin-like modifier UFM1 from the E1 enzyme UBA5 and forms an intermediate with UFM1 via a thioester linkage. Ufmylation is involved in various processes, such as ribosome recycling, response to DNA damage, interferon response or reticulophagy (also called ER-phagy). This chain is Ubiquitin-fold modifier-conjugating enzyme 1, found in Homo sapiens (Human).